The chain runs to 115 residues: Large ribosomal subunit protein bL19 (115 aa).

The protein belongs to the bacterial ribosomal protein bL19 family.

Its function is as follows. This protein is located at the 30S-50S ribosomal subunit interface and may play a role in the structure and function of the aminoacyl-tRNA binding site. The chain is Large ribosomal subunit protein bL19 from Leifsonia xyli subsp. xyli (strain CTCB07).